Here is a 264-residue protein sequence, read N- to C-terminus: MKAYLDLMRHVLDNGTDKSDRTGTGTRSVFGYQMRFDLGKGFPLLTTKKLHLRSIIHELLWFLKGDTNIKYLKDNNVSIWDEWADENGDLGPVYGYQWRNWPAPDGRHIDQIANVVEQIKKNPDSRRLIVSAWNPALVDEMALPPCHALFQFYVADGKLSCQLYQRSADIFLGVPFNIASYALLTMMMAQVCGLEAGEFVHTFGDAHLYRNHFEQAALQLEREPRALPVMKINPEVKDLFSFKFEDFELEGYDPHPHIKAAVSV.

Arg21 serves as a coordination point for dUMP. His51 serves as a coordination point for (6R)-5,10-methylene-5,6,7,8-tetrahydrofolate. 126-127 (RR) is a binding site for dUMP. Cys146 (nucleophile) is an active-site residue. Residues 166–169 (RSAD), Asn177, and 207–209 (HLY) contribute to the dUMP site. Asp169 contacts (6R)-5,10-methylene-5,6,7,8-tetrahydrofolate. Ser263 is a (6R)-5,10-methylene-5,6,7,8-tetrahydrofolate binding site.

This sequence belongs to the thymidylate synthase family. Bacterial-type ThyA subfamily. Homodimer.

The protein localises to the cytoplasm. The catalysed reaction is dUMP + (6R)-5,10-methylene-5,6,7,8-tetrahydrofolate = 7,8-dihydrofolate + dTMP. The protein operates within pyrimidine metabolism; dTTP biosynthesis. In terms of biological role, catalyzes the reductive methylation of 2'-deoxyuridine-5'-monophosphate (dUMP) to 2'-deoxythymidine-5'-monophosphate (dTMP) while utilizing 5,10-methylenetetrahydrofolate (mTHF) as the methyl donor and reductant in the reaction, yielding dihydrofolate (DHF) as a by-product. This enzymatic reaction provides an intracellular de novo source of dTMP, an essential precursor for DNA biosynthesis. The polypeptide is Thymidylate synthase (Neisseria meningitidis serogroup C / serotype 2a (strain ATCC 700532 / DSM 15464 / FAM18)).